The following is a 206-amino-acid chain: Small ribosomal subunit protein uS4 (206 aa).

A disordered region spans residues 27 to 47 (PSESKCNMNAAPGQHGGRRGR). The region spanning 96-158 (QRLDNVVYRM…SRKQIRIQSA (63 aa)) is the S4 RNA-binding domain.

The protein belongs to the universal ribosomal protein uS4 family. In terms of assembly, part of the 30S ribosomal subunit. Contacts protein S5. The interaction surface between S4 and S5 is involved in control of translational fidelity.

Functionally, one of the primary rRNA binding proteins, it binds directly to 16S rRNA where it nucleates assembly of the body of the 30S subunit. Its function is as follows. With S5 and S12 plays an important role in translational accuracy. The polypeptide is Small ribosomal subunit protein uS4 (Dichelobacter nodosus (strain VCS1703A)).